The primary structure comprises 118 residues: Group 1 truncated hemoglobin GlbN (118 aa).

His70 provides a ligand contact to heme.

Belongs to the truncated hemoglobin family. Group I subfamily. As to quaternary structure, monomer. It depends on heme as a cofactor.

The protein resides in the membrane. This Nostoc commune protein is Group 1 truncated hemoglobin GlbN (glbN).